Here is a 199-residue protein sequence, read N- to C-terminus: Small ribosomal subunit protein uS4B (199 aa).

The S4 RNA-binding domain maps to 88-151 (CRLDNLVYRT…RKNKIFIDNF (64 aa)).

Belongs to the universal ribosomal protein uS4 family. As to quaternary structure, part of the 30S ribosomal subunit. Contacts protein S5. The interaction surface between S4 and S5 is involved in control of translational fidelity.

Functionally, one of the primary rRNA binding proteins, it binds directly to 16S rRNA where it nucleates assembly of the body of the 30S subunit. In terms of biological role, with S5 and S12 plays an important role in translational accuracy. This chain is Small ribosomal subunit protein uS4B, found in Alkaliphilus metalliredigens (strain QYMF).